We begin with the raw amino-acid sequence, 299 residues long: HTH-type transcriptional regulator CynR (299 aa).

Residues 1–58 (MLSRHINYFLAVAEHGSFTRAASALHVSQPALSQQIRQLEESLGVPLFDRSGRTIRLT) enclose the HTH lysR-type domain. The H-T-H motif DNA-binding region spans 18-37 (FTRAASALHVSQPALSQQIR).

The protein belongs to the LysR transcriptional regulatory family.

The protein localises to the cytoplasm. Positively regulates the cynTSX operon, and negatively regulates its own transcription. Binds specifically to the cynR-cynTSX intergenic region. In Escherichia coli (strain K12), this protein is HTH-type transcriptional regulator CynR (cynR).